Consider the following 281-residue polypeptide: MNVIWRSCICRLRQGKVPHRCQSGVHPVAPLGSRILTDPAKVFEHNMWDHMQWSKEEEDAARKKVEENSATRVAPEEQVKFESDANKYWDIFYQTHKNKFFKNRNWLLREFPEILPVNQNTKEKVGESSWDQVGSSISRTQGTETHCQESFVSPEPGSRGRSAPDPDLEEYSKGPGKTEPFPGSNATFRILEVGCGAGNSVFPILNTLQNIPGSFLYCCDFASEAVELVKSHESYSEAQCSAFIHDVCDDGLAYPFPDGILDVVLLVFVLSSIHPDRALFI.

Residues 1-22 (MNVIWRSCICRLRQGKVPHRCQ) constitute a mitochondrion transit peptide. Lysine 80 participates in a covalent cross-link: Glycyl lysine isopeptide (Lys-Gly) (interchain with G-Cter in SUMO). Residues tryptophan 89 and tyrosine 93 each contribute to the S-adenosyl-L-methionine site. The span at 139-151 (RTQGTETHCQESF) shows a compositional bias: polar residues. Positions 139-180 (RTQGTETHCQESFVSPEPGSRGRSAPDPDLEEYSKGPGKTEP) are disordered. Residues glycine 194, aspartate 220, and aspartate 246 each contribute to the S-adenosyl-L-methionine site.

This sequence belongs to the methyltransferase superfamily. METL family. Interacts with EP300. Absent in embryonic lung but is induced in a fibroblast cell line by stretch. As to expression, expressed in undifferentiated progenitor cells, while its expression is inhibited by stretch. In terms of tissue distribution, absent in undifferentiated embryonic lung mesenchymal cells, but expression is induced by stretch. Expressed in mature adipose tissue.

The protein localises to the mitochondrion. It localises to the cytoplasm. The protein resides in the nucleus. It catalyses the reaction cytidine(32) in tRNA(Ser) + S-adenosyl-L-methionine = N(3)-methylcytidine(32) in tRNA(Ser) + S-adenosyl-L-homocysteine + H(+). The catalysed reaction is cytidine(32) in tRNA(Thr) + S-adenosyl-L-methionine = N(3)-methylcytidine(32) in tRNA(Thr) + S-adenosyl-L-homocysteine + H(+). It carries out the reaction a cytidine in mRNA + S-adenosyl-L-methionine = an N(3)-methylcytidine in mRNA + S-adenosyl-L-homocysteine + H(+). Its function is as follows. Mitochondrial S-adenosyl-L-methionine-dependent methyltransferase that mediates N(3)-methylcytidine modification of residue 32 of the tRNA anticodon loop of mitochondrial tRNA(Ser)(UCN) and tRNA(Thr). N(3)-methylcytidine methylation modification regulates mitochondrial translation efficiency and is required for activity of the respiratory chain. N(3)-methylcytidine methylation of mitochondrial tRNA(Ser)(UCN) requires the formation of N(6)-dimethylallyladenosine(37) (i6A37) by TRIT1 as prerequisite. May also mediate N(3)-methylcytidine modification of mRNAs. The existence of N(3)-methylcytidine modification on mRNAs is however unclear, and additional evidences are required to confirm the role of the N(3)-methylcytidine-specific mRNA methyltransferase activity of METTL8 in vivo. In terms of biological role, overexpression in lung progenitor cells stimulates smooth muscle-specific gene expression and suppresses adipogenic gene expression. Stimulates adipogenesis. The protein is tRNA N(3)-cytidine methyltransferase METTL8, mitochondrial of Mus musculus (Mouse).